The primary structure comprises 156 residues: AP-1 complex subunit sigma-1 (156 aa).

It belongs to the adaptor complexes small subunit family. As to quaternary structure, adapter protein complex 1 (AP-1) is a heterotetramer composed of two large adaptins (gamma-type subunit APL4 and beta-type subunit APL2), a medium adaptin (mu-type subunit APM1) and a small adaptin (sigma-type subunit APS1). AP-1 interacts with clathrin. Also a component of the AP-1R complex composed of at least APM2, APL4 and APS1.

Its subcellular location is the cytoplasm. The protein resides in the nucleus. It localises to the cytoplasmic vesicle. It is found in the clathrin-coated vesicle membrane. The protein localises to the endosome. Its subcellular location is the golgi apparatus. In terms of biological role, component of the adapter complexes which link clathrin to receptors in coated vesicles. Clathrin-associated protein complexes are believed to interact with the cytoplasmic tails of membrane proteins, leading to their selection and concentration. AP19 is probably a subunit of the Golgi membrane adapter. Component of the AP-1-related (AP-1R) complex, an adapter protein complex that mediates sorting of cargo SNARE SNC1. In contrast to the APM1-containing AP-1 complex, AP-1R is incapable of sorting CHS3. This is AP-1 complex subunit sigma-1 (APS1) from Saccharomyces cerevisiae (strain ATCC 204508 / S288c) (Baker's yeast).